The following is a 239-amino-acid chain: 3,4-dihydroxyphthalate decarboxylase (239 aa).

Glu-84 serves as the catalytic Proton donor/acceptor. A divalent metal cation contacts are provided by Glu-84, His-103, His-105, and His-171.

This sequence belongs to the aldolase class II family. Requires a divalent metal cation as cofactor.

The enzyme catalyses 3,4-dihydroxyphthalate + H(+) = 3,4-dihydroxybenzoate + CO2. The protein operates within xenobiotic degradation; phthalate degradation. Functionally, catalyzes the decarboxylation of 3,4-dihydroxyphthalate to protocatechuate (3,4-dihydroxybenzoate) during phthalate metabolism. The protein is 3,4-dihydroxyphthalate decarboxylase of Terrabacter sp. (strain DBF63).